Reading from the N-terminus, the 145-residue chain is Sec-independent protein translocase protein TatB (145 aa).

Residues 1-21 (MLDVGMTELLCFAIIAILVLG) traverse the membrane as a helical segment.

Belongs to the TatB family. In terms of assembly, the Tat system comprises two distinct complexes: a TatABC complex, containing multiple copies of TatA, TatB and TatC subunits, and a separate TatA complex, containing only TatA subunits. Substrates initially bind to the TatABC complex, which probably triggers association of the separate TatA complex to form the active translocon.

It is found in the cell inner membrane. Functionally, part of the twin-arginine translocation (Tat) system that transports large folded proteins containing a characteristic twin-arginine motif in their signal peptide across membranes. Together with TatC, TatB is part of a receptor directly interacting with Tat signal peptides. TatB may form an oligomeric binding site that transiently accommodates folded Tat precursor proteins before their translocation. The polypeptide is Sec-independent protein translocase protein TatB (Acinetobacter baumannii (strain ATCC 17978 / DSM 105126 / CIP 53.77 / LMG 1025 / NCDC KC755 / 5377)).